The sequence spans 288 residues: Galactose/N-acetyl-D-galactosamine lectin light subunit 1 (288 aa).

Positions 1 to 15 are cleaved as a signal peptide; sequence MIILVLLISYSFGKT. N-linked (GlcNAc...) asparagine glycosylation is found at asparagine 205 and asparagine 261.

Heterodimer composed of a 170 kDa heavy subunit (hgl) and a 31/35 kDa light subunit (lgl); disulfide-linked.

The protein resides in the cell membrane. Light subunit of a heterodimeric lectin; the heavy subunit binds galactose and N-acetyl-D-galactosamine of host glycoproteins and thus mediates adhesion to host cells. The chain is Galactose/N-acetyl-D-galactosamine lectin light subunit 1 from Entamoeba histolytica (strain ATCC 30459 / HM-1:IMSS / ABRM).